A 119-amino-acid polypeptide reads, in one-letter code: Large ribosomal subunit protein uL18 (119 aa).

It belongs to the universal ribosomal protein uL18 family. In terms of assembly, part of the 50S ribosomal subunit; part of the 5S rRNA/L5/L18/L25 subcomplex. Contacts the 5S and 23S rRNAs.

Its function is as follows. This is one of the proteins that bind and probably mediate the attachment of the 5S RNA into the large ribosomal subunit, where it forms part of the central protuberance. The sequence is that of Large ribosomal subunit protein uL18 from Ruegeria pomeroyi (strain ATCC 700808 / DSM 15171 / DSS-3) (Silicibacter pomeroyi).